The primary structure comprises 322 residues: MTIVNRIRTDVVNVAKSFGAEYSEAVIDQIFQGFGEKFTNTGFAIRVQNKRNQKVDCNIRYGEAKENCLAWDIARESGLLSDQGHPVDTLIQEMFQAIPAIAYGADFDINYGLVKIWHLPKIVPVEEAFKIPSLPKSVNAHIDFFKKYHLDALCALTVDYRNKSTNLYFDAHHPEQRTTQFYKNILQSQQFEVPSDEVLEILVNCPEIAVTFNWSSPGIERMCFYTAFVNRETVPQHINPVLKKFAQEAPALLDNPGFLVGWSFGPDAKKGTYIKIDVDYHGLVVPSFFHMHNLPLPIPEANSVFDLPSSDTEDKLNSIVMS.

Dimethylallyl diphosphate is bound by residues R46, R60, K115, N166, Y168, R221, Y225, and K275.

Belongs to the aromatic prenyltransferase family.

The catalysed reaction is hapalindole G + dimethylallyl diphosphate = ambiguine A + diphosphate. It catalyses the reaction hapalindole U + dimethylallyl diphosphate + H(+) = ambiguine H + diphosphate. Activity is slightly increased in the presence of Mg(2+). Its function is as follows. Prenyltransferase involved in the biosynthesis of ambiguines, a family of hapalindole-type alkaloids. Catalyzes the reverse prenylation of hapalindole G or U at the C2 position with dimethylallyl diphosphate (DMAPP) to generate ambiguine A or H, respectively. In addition, accepts hapalindole A, an epimer of hapalindole G, and catalyzes normal prenylation at its C2 position. This Fischerella ambigua (strain UTEX 1903) protein is Hapalindole dimethylallyltransferase.